Here is a 200-residue protein sequence, read N- to C-terminus: Ras-related protein Rab-7b (200 aa).

GTP-binding positions include 15–22 (GALGVGKT), 34–40 (YEDYQTT), 63–67 (DTGGQ), 124–127 (NKID), and 154–155 (AK). 2 consecutive short sequence motifs (switch) follow at residues 28–41 (YVHK…QTTL) and 67–82 (QERF…KGSD). Position 186 is a phosphoserine (S186). 2 S-geranylgeranyl cysteine lipidation sites follow: C199 and C200.

This sequence belongs to the small GTPase superfamily. Rab family.

Its subcellular location is the late endosome. The protein resides in the lysosome. The protein localises to the golgi apparatus. It is found in the trans-Golgi network. It localises to the cytoplasmic vesicle. Its subcellular location is the phagosome. The protein resides in the phagosome membrane. Functionally, controls vesicular trafficking from endosomes to the trans-Golgi network (TGN). Acts as a negative regulator of TLR9 signaling and can suppress TLR9-triggered TNFA, IL6, and IFNB production in macrophages by promoting TLR9 lysosomal degradation. Also negatively regulates TLR4 signaling in macrophages by promoting lysosomal degradation of TLR4. Promotes megakaryocytic differentiation by increasing NF-kappa-B-dependent IL6 production and subsequently enhancing the association of STAT3 with GATA1. Not involved in the regulation of the EGF- and EGFR degradation pathway. This is Ras-related protein Rab-7b (RAB7B) from Bos taurus (Bovine).